The chain runs to 443 residues: COP9 signalosome complex subunit 2 (443 aa).

The mediates interaction with NIF3L1 stretch occupies residues 1–275; the sequence is MSDMEDDFMC…DESGSPRRTT (275 aa). Residues 254 to 416 enclose the PCI domain; sequence AHTDFFEAFK…QLLELDHQKR (163 aa).

Belongs to the CSN2 family. Component of the CSN complex, composed of COPS1/GPS1, COPS2, COPS3, COPS4, COPS5, COPS6, COPS7 (COPS7A or COPS7B), COPS8 and COPS9 isoform 1. In the complex, it probably interacts directly with COPS1, COPS4, COPS5, COPS6 and COPS7 (COPS7A or COPS7B). Specifically interacts with the ligand binding domain of the thyroid receptor (TR). Does not require the presence of thyroid hormone for its interaction. Interacts with CUL1 and CUL2. Interacts with IRF8/ICSBP1 and with nuclear receptors NR2F1 and NR0B1. Interacts with NIF3L1. Post-translationally, phosphorylated by CK2 and PKD kinases.

The protein localises to the cytoplasm. Its subcellular location is the nucleus. Its function is as follows. Essential component of the COP9 signalosome complex (CSN), a complex involved in various cellular and developmental processes. The CSN complex is an essential regulator of the ubiquitin (Ubl) conjugation pathway by mediating the deneddylation of the cullin subunits of SCF-type E3 ligase complexes, leading to decrease the Ubl ligase activity of SCF-type complexes such as SCF, CSA or DDB2. The complex is also involved in phosphorylation of p53/TP53, c-jun/JUN, IkappaBalpha/NFKBIA, ITPK1 and IRF8/ICSBP, possibly via its association with CK2 and PKD kinases. CSN-dependent phosphorylation of TP53 and JUN promotes and protects degradation by the Ubl system, respectively. Involved in early stage of neuronal differentiation via its interaction with NIF3L1. The sequence is that of COP9 signalosome complex subunit 2 (COPS2) from Homo sapiens (Human).